A 517-amino-acid polypeptide reads, in one-letter code: PSTB2-interacting protein 1 (517 aa).

As to quaternary structure, interacts with PDR17/PSTB2 and SCS2.

Phosphatidic acid-binding protein involved in interorganelle phosphatidylserine (PtdSer) transport. Linkks a PtdSer donor membrane (via binding of SCS2 and phosphatidic acid present in the donor membrane) with an acceptor membrane (via its interaction with PDR17), forming a zone of apposition that facilitates PtdSer transfer. This Saccharomyces cerevisiae (strain ATCC 204508 / S288c) (Baker's yeast) protein is PSTB2-interacting protein 1.